The following is an 81-amino-acid chain: Escargot/snail protein homolog (81 aa).

C2H2-type zinc fingers lie at residues 1 to 5 (HQQFH), 17 to 39 (FSCKYCEKVYVSLGALKMHIRTH), 43 to 65 (CKCHLCGKAFSRPWLLQGHIRTH), and 71 to 81 (FSCQHCNRAFA).

This sequence belongs to the snail C2H2-type zinc-finger protein family.

The protein resides in the nucleus. The protein is Escargot/snail protein homolog of Apis mellifera (Honeybee).